The following is a 628-amino-acid chain: MESLVFARRSGPTPSAAELARPLAEGLIKSPKPLMKKQAVKRHHHKHNLRHRYEFLETLGKGTYGKVKKARESSGRLVAIKSIRKDKIKDEQDLMHIRREIEIMSSLNHPHIIAIHEVFENSSKIVIVMEYASRGDLYDYISERQQLSEREARHFFRQIVSAVHYCHQNRVVHRDLKLENILLDANGNIKIADFGLSNLYHQGKFLQTFCGSPLYASPEIVNGKPYTGPEVDSWSLGVLLYILVHGTMPFDGHDHKILVKQISNGAYREPPKPSDACGLIRWLLMVNPTRRATLEDVASHWWVNWGYATRVGEQEAPHEGGHPGSDSARASMADWLRRSSRPLLENGAKVCSFFKQHAPGGGSTTPGLERQHSLKKSRKENDMAQSLHSDTADDTAHRPGKSNLKLPKGILKKKVSASAEGVQEDPPELSPIPASPGQAAPLLPKKGILKKPRQRESGYYSSPEPSESGELLDAGDVFVSGDPKEQKPPQASGLLLHRKGILKLNGKFSQTALELAAPTTFGSLDELAPPRPLARASRPSGAVSEDSILSSESFDQLDLPERLPEPPLRGCVSVDNLTGLEEPPSEGPGSCLRRWRQDPLGDSCFSLTDCQEVTATYRQALRVCSKLT.

Methionine 1 carries the N-acetylmethionine modification. The Protein kinase domain maps to 53-303 (YEFLETLGKG…LEDVASHWWV (251 aa)). ATP contacts are provided by residues 59-67 (LGKGTYGKV) and lysine 81. Residue aspartate 175 is the Proton acceptor of the active site. Threonine 208 bears the Phosphothreonine; by LKB1 mark. Residues 355–493 (KQHAPGGGST…KEQKPPQASG (139 aa)) form a disordered region. Serine 435 carries the phosphoserine modification. The segment covering 457–469 (SGYYSSPEPSESG) has biased composition (low complexity). Phosphoserine is present on residues serine 523, serine 544, serine 547, and serine 573. Residues 531 to 562 (RPLARASRPSGAVSEDSILSSESFDQLDLPER) form a disordered region.

Belongs to the protein kinase superfamily. CAMK Ser/Thr protein kinase family. SNF1 subfamily. It depends on Mg(2+) as a cofactor. In terms of processing, phosphorylated at Thr-208 by STK11/LKB1 in complex with STE20-related adapter-alpha (STRADA) pseudo kinase and CAB39. Autophosphorylation is also possible at Thr-208.

It catalyses the reaction L-seryl-[protein] + ATP = O-phospho-L-seryl-[protein] + ADP + H(+). The enzyme catalyses L-threonyl-[protein] + ATP = O-phospho-L-threonyl-[protein] + ADP + H(+). Its activity is regulated as follows. Activated by phosphorylation on Thr-208. Functionally, stress-activated kinase involved in tolerance to glucose starvation. Induces cell-cell detachment by increasing F-actin conversion to G-actin. Expression is induced by CD95 or TNF-alpha, via NF-kappa-B. Protects cells from CD95-mediated apoptosis and is required for the increased motility and invasiveness of CD95-activated tumor cells. Phosphorylates LATS1 and LATS2. Plays a key role in neural tube closure during embryonic development through LATS2 phosphorylation and regulation of the nuclear localization of YAP1 a critical downstream regulatory target in the Hippo signaling pathway. The chain is NUAK family SNF1-like kinase 2 from Homo sapiens (Human).